Consider the following 455-residue polypeptide: Aminopeptidase YwaD (455 aa).

Positions 1–31 are cleaved as a signal peptide; the sequence is MKKLLTVMTMAVLTAGTLLLPAQSVTPAAHA. Positions 250, 262, 295, 323, and 401 each coordinate Zn(2+).

The protein belongs to the peptidase M28 family. M28B subfamily. Monomer. It depends on Zn(2+) as a cofactor.

Its subcellular location is the secreted. The catalysed reaction is Release of N-terminal Arg and Lys from oligopeptides when P1' is not Pro. Also acts on arylamides of Arg and Lys.. The enzyme catalyses Release of an N-terminal amino acid, preferentially leucine, but not glutamic or aspartic acids.. Its function is as follows. Catalyzes the hydrolysis of a range of N-terminal amino acids. In Bacillus subtilis (strain 168), this protein is Aminopeptidase YwaD (ywaD).